Here is a 360-residue protein sequence, read N- to C-terminus: DNA replication and repair protein RecF (360 aa).

Position 33 to 40 (33 to 40 (GENGSGKT)) interacts with ATP.

The protein belongs to the RecF family.

It is found in the cytoplasm. The RecF protein is involved in DNA metabolism; it is required for DNA replication and normal SOS inducibility. RecF binds preferentially to single-stranded, linear DNA. It also seems to bind ATP. The chain is DNA replication and repair protein RecF from Rickettsia africae (strain ESF-5).